Consider the following 353-residue polypeptide: Photosystem II protein D1 (353 aa).

The residue at position 2 (T2) is an N-acetylthreonine. Phosphothreonine is present on T2. Helical transmembrane passes span 29-46, 118-133, and 142-156; these read YIGWFGVLMIPTLLTATA, HFLLGVACYMGREWEL, and WIAVAYSAPVAAAAA. H118 lines the chlorophyll a pocket. Pheophytin a is bound at residue Y126. [CaMn4O5] cluster is bound by residues D170 and E189. A helical transmembrane segment spans residues 197-218; sequence FHMLGVAGVFGGSLFSAMHGSL. A chlorophyll a-binding site is contributed by H198. A quinone is bound by residues H215 and 264-265; that span reads SF. H215 is a binding site for Fe cation. H272 lines the Fe cation pocket. The chain crosses the membrane as a helical span at residues 274-288; the sequence is FLAAWPVVGIWFTAL. Residues H332, E333, D342, and A344 each contribute to the [CaMn4O5] cluster site. Positions 345 to 353 are excised as a propeptide; it reads SVEAPSVNG.

Belongs to the reaction center PufL/M/PsbA/D family. As to quaternary structure, PSII is composed of 1 copy each of membrane proteins PsbA, PsbB, PsbC, PsbD, PsbE, PsbF, PsbH, PsbI, PsbJ, PsbK, PsbL, PsbM, PsbT, PsbX, PsbY, PsbZ, Psb30/Ycf12, at least 3 peripheral proteins of the oxygen-evolving complex and a large number of cofactors. It forms dimeric complexes. The cofactor is The D1/D2 heterodimer binds P680, chlorophylls that are the primary electron donor of PSII, and subsequent electron acceptors. It shares a non-heme iron and each subunit binds pheophytin, quinone, additional chlorophylls, carotenoids and lipids. D1 provides most of the ligands for the Mn4-Ca-O5 cluster of the oxygen-evolving complex (OEC). There is also a Cl(-1) ion associated with D1 and D2, which is required for oxygen evolution. The PSII complex binds additional chlorophylls, carotenoids and specific lipids.. Tyr-161 forms a radical intermediate that is referred to as redox-active TyrZ, YZ or Y-Z. In terms of processing, C-terminally processed by CTPA; processing is essential to allow assembly of the oxygen-evolving complex and thus photosynthetic growth.

It is found in the plastid. The protein localises to the chloroplast thylakoid membrane. The enzyme catalyses 2 a plastoquinone + 4 hnu + 2 H2O = 2 a plastoquinol + O2. Functionally, photosystem II (PSII) is a light-driven water:plastoquinone oxidoreductase that uses light energy to abstract electrons from H(2)O, generating O(2) and a proton gradient subsequently used for ATP formation. It consists of a core antenna complex that captures photons, and an electron transfer chain that converts photonic excitation into a charge separation. The D1/D2 (PsbA/PsbD) reaction center heterodimer binds P680, the primary electron donor of PSII as well as several subsequent electron acceptors. In Huperzia lucidula (Shining clubmoss), this protein is Photosystem II protein D1.